The following is a 467-amino-acid chain: MQSSVYRDKASSIAMILETQRNVEFPHRIVDKRPRKRPRLTWDAAPPLLPPPPPPTVFQPPLYYGPEFASGLVPNFVYPNMFYNGLPRQGSPPWRPDDKDGHYVFVVGDTLTPRYQILSKMGEGTFGQVLECFDNKNKEVVAIKVIRSINKYREAAMIEIDVLQRLTRHDVGGSRCVQIRNWFDYRNHICIVFEKLGPSLYDFLRKNSYRSFPIDLVRELGRQLLESVAYMHDLRLIHTDLKPENILLVSSEYIKIPDYKFLSRPTKDGSYFKNLPKSSAIKLIDFGSTTFEHQDHNYIVSTRHYRAPEVILGVGWNYPCDLWSIGCILVELCSGEALFQTHENLEHLAMMERVLGPLPPHMVLRADRRSEKYFRRGAKLDWPEGATSRDSLKAVWKLPRLPNLIMQHVDHSAGDLIDLLQGLLRYDPTERFKAREALNHPFFTRSREQSIPPFNPNPHPFLYNQKN.

Residues 115-443 (YQILSKMGEG…AREALNHPFF (329 aa)) enclose the Protein kinase domain. Residues 121 to 129 (MGEGTFGQV) and lysine 144 each bind ATP. Catalysis depends on aspartate 240, which acts as the Proton acceptor. Residues 447 to 467 (REQSIPPFNPNPHPFLYNQKN) are disordered.

It belongs to the protein kinase superfamily. CMGC Ser/Thr protein kinase family. Lammer subfamily.

The catalysed reaction is L-seryl-[protein] + ATP = O-phospho-L-seryl-[protein] + ADP + H(+). It carries out the reaction L-threonyl-[protein] + ATP = O-phospho-L-threonyl-[protein] + ADP + H(+). It catalyses the reaction L-tyrosyl-[protein] + ATP = O-phospho-L-tyrosyl-[protein] + ADP + H(+). Its function is as follows. Activator of yeast transcription factor, STE12. The chain is Serine/threonine-protein kinase AFC1 (AFC1) from Arabidopsis thaliana (Mouse-ear cress).